A 642-amino-acid polypeptide reads, in one-letter code: Threonine--tRNA ligase (642 aa).

In terms of domain architecture, TGS spans methionine 1–threonine 61. Positions aspartate 243–proline 534 are catalytic. Residues cysteine 334, histidine 385, and histidine 511 each contribute to the Zn(2+) site.

This sequence belongs to the class-II aminoacyl-tRNA synthetase family. In terms of assembly, homodimer. It depends on Zn(2+) as a cofactor.

It localises to the cytoplasm. The catalysed reaction is tRNA(Thr) + L-threonine + ATP = L-threonyl-tRNA(Thr) + AMP + diphosphate + H(+). Catalyzes the attachment of threonine to tRNA(Thr) in a two-step reaction: L-threonine is first activated by ATP to form Thr-AMP and then transferred to the acceptor end of tRNA(Thr). Also edits incorrectly charged L-seryl-tRNA(Thr). The chain is Threonine--tRNA ligase from Tolumonas auensis (strain DSM 9187 / NBRC 110442 / TA 4).